The following is a 173-amino-acid chain: MIDSDGFRANVGIIICNRFGQVMWARRFGQHSWQYPQGGVDDGETPEEAMYRELYEEVGLRPEHVQILTSTRSWLRYRLPKRLIRQDSKPVCIGQKQKWFLLQLKSSESAINLNACGHPEFDDWRWVSYWYPVRQVVSFKRDVYRKVMKEFAPTALPFQSREHHSNNRRGRRR.

In terms of domain architecture, Nudix hydrolase spans 6–149 (GFRANVGIII…KRDVYRKVMK (144 aa)). A Nudix box motif is present at residues 38–59 (GGVDDGETPEEAMYRELYEEVG).

Belongs to the Nudix hydrolase family. RppH subfamily. The cofactor is a divalent metal cation.

Its function is as follows. Accelerates the degradation of transcripts by removing pyrophosphate from the 5'-end of triphosphorylated RNA, leading to a more labile monophosphorylated state that can stimulate subsequent ribonuclease cleavage. This Shewanella woodyi (strain ATCC 51908 / MS32) protein is RNA pyrophosphohydrolase.